Reading from the N-terminus, the 482-residue chain is Signal recognition particle protein (482 aa).

Residues 107-114 (GLQGTGKT), 189-193 (DTAGR), and 247-250 (TKLD) contribute to the GTP site. 2 disordered regions span residues 380-413 (MTTE…TDVS) and 452-482 (FGGQ…FGQL). Gly residues predominate over residues 452–468 (FGGQPGPGFRGYRGGGG). Residues 469 to 482 (KPKKKKKKKGFGQL) show a composition bias toward basic residues.

This sequence belongs to the GTP-binding SRP family. SRP54 subfamily. In terms of assembly, part of the signal recognition particle protein translocation system, which is composed of SRP and FtsY.

It is found in the cytoplasm. It carries out the reaction GTP + H2O = GDP + phosphate + H(+). Its function is as follows. Involved in targeting and insertion of nascent membrane proteins into the cytoplasmic membrane. Binds to the hydrophobic signal sequence of the ribosome-nascent chain (RNC) as it emerges from the ribosomes. The SRP-RNC complex is then targeted to the cytoplasmic membrane where it interacts with the SRP receptor FtsY. This chain is Signal recognition particle protein, found in Synechocystis sp. (strain ATCC 27184 / PCC 6803 / Kazusa).